The chain runs to 141 residues: Zinc finger protein 593 homolog (141 aa).

A disordered region spans residues 1–32 (MGRYSGHGGTHTKKKQYKRARSTKNRAKDIDQ). Positions 10–25 (THTKKKQYKRARSTKN) are enriched in basic residues. Residues 60-84 (NYCIHCSKHFVTNEDLQSHIKGKPH) form a C2H2-type zinc finger.

This sequence belongs to the ZNF593/BUD20 C2H2-type zinc-finger protein family. In terms of assembly, associates with pre-60S ribosomal particles; released from the pre-60S particle very early in the cytoplasm.

Its subcellular location is the nucleus. The protein resides in the cytoplasm. Involved in pre-60S ribosomal particles maturation by promoting the nuclear export of the 60S ribosome. This chain is Zinc finger protein 593 homolog, found in Dictyostelium discoideum (Social amoeba).